The sequence spans 137 residues: Large ribosomal subunit protein uL14 (137 aa).

The protein belongs to the universal ribosomal protein uL14 family. Part of the 50S ribosomal subunit. Forms a cluster with proteins L3 and L24e, part of which may contact the 16S rRNA in 2 intersubunit bridges.

Functionally, binds to 23S rRNA. Forms part of two intersubunit bridges in the 70S ribosome. This is Large ribosomal subunit protein uL14 from Ignicoccus hospitalis (strain KIN4/I / DSM 18386 / JCM 14125).